The following is a 218-amino-acid chain: Small ribosomal subunit protein uS3c (218 aa).

The 72-residue stretch at 47 to 118 (VQNNIRISSG…KLNIAITRIS (72 aa)) folds into the KH type-2 domain.

This sequence belongs to the universal ribosomal protein uS3 family. In terms of assembly, part of the 30S ribosomal subunit.

The protein resides in the plastid. It localises to the chloroplast. This chain is Small ribosomal subunit protein uS3c (rps3), found in Draba nemorosa (Woodland whitlowgrass).